The sequence spans 781 residues: Isoquinoline 1-oxidoreductase subunit beta (781 aa).

As to quaternary structure, heterodimer of an alpha chain and a beta chain.

It catalyses the reaction isoquinoline + A + H2O = isoquinolin-1(2H)-one + AH2. Functionally, specific towards N-containing N-heterocyclic substrates, including isoquinoline, isoquinolin-5-ol, phthalazine and quinazoline. The chain is Isoquinoline 1-oxidoreductase subunit beta (iorB) from Brevundimonas diminuta (Pseudomonas diminuta).